Here is an 881-residue protein sequence, read N- to C-terminus: Fanconi anemia core complex-associated protein 100 (881 aa).

The tract at residues 94 to 119 (GRSRSTSQDDRDSEDGDQPSPVIPVD) is disordered. Residue Ser-667 is modified to Phosphoserine.

In terms of assembly, belongs to the multisubunit FA complex composed of FANCA, FANCB, FANCC, FANCE, FANCF, FANCG, FANCL/PHF9, FANCM, FAAP24 and FAAP100. Forms a subcomplex with FANCB and FANCL.

The protein resides in the nucleus. In terms of biological role, plays a role in Fanconi anemia-associated DNA damage response network. Regulates FANCD2 monoubiquitination and the stability of the FA core complex. Induces chromosomal instability as well as hypersensitivity to DNA cross-linking agents, when repressed. This is Fanconi anemia core complex-associated protein 100 from Homo sapiens (Human).